Consider the following 295-residue polypeptide: NAD kinase (295 aa).

The active-site Proton acceptor is the D72. NAD(+) contacts are provided by residues 72-73, 146-147, R157, K174, D176, 187-192, and Q247; these read DG, ND, and TAYALS.

It belongs to the NAD kinase family. A divalent metal cation is required as a cofactor.

It is found in the cytoplasm. It carries out the reaction NAD(+) + ATP = ADP + NADP(+) + H(+). Involved in the regulation of the intracellular balance of NAD and NADP, and is a key enzyme in the biosynthesis of NADP. Catalyzes specifically the phosphorylation on 2'-hydroxyl of the adenosine moiety of NAD to yield NADP. The chain is NAD kinase from Azotobacter vinelandii (strain DJ / ATCC BAA-1303).